Here is a 379-residue protein sequence, read N- to C-terminus: Intracellular hyaluronan-binding protein 4.S (379 aa).

Disordered regions lie at residues Thr52–Glu260 and Ser332–Ala379. Residues Gly71–Ala81 are compositionally biased toward basic and acidic residues. A compositionally biased stretch (polar residues) spans Lys107 to Ser116. Basic and acidic residues-rich tracts occupy residues Val118 to Arg133 and Arg139 to Met158. Gly residues predominate over residues Gly162–Gly174. Over residues Thr179–Gly208 the composition is skewed to basic and acidic residues. Acidic residues-rich tracts occupy residues Glu232–Ala241 and Asn368–Ala379.

Belongs to the SERBP1-HABP4 family. As to quaternary structure, associates with ribosomes; promoting ribosome stabilization. Interacts with eef2/eEF2; promoting ribosome stabilization.

Its subcellular location is the nucleus. It is found in the cytoplasm. The protein resides in the stress granule. It localises to the nucleolus. The protein localises to the nucleus speckle. Its subcellular location is the cajal body. Ribosome-binding protein that promotes ribosome hibernation, a process during which ribosomes are stabilized in an inactive state and preserved from proteasomal degradation. Acts via its association with eef2/eEF2 factor at the A-site of the ribosome, promoting ribosome stabilization in an inactive state compatible with storage. Plays a key role in ribosome hibernation in the mature egg by promoting ribosome stabilization. Ribosomes, which are produced in large quantities during oogenesis, are stored and translationally repressed in the egg and early embryo. In Xenopus laevis (African clawed frog), this protein is Intracellular hyaluronan-binding protein 4.S.